A 200-amino-acid chain; its full sequence is Endoribonuclease YbeY (200 aa).

The Zn(2+) site is built by histidine 120, histidine 124, and histidine 130.

It belongs to the endoribonuclease YbeY family. Zn(2+) is required as a cofactor.

Its subcellular location is the cytoplasm. Functionally, single strand-specific metallo-endoribonuclease involved in late-stage 70S ribosome quality control and in maturation of the 3' terminus of the 16S rRNA. This chain is Endoribonuclease YbeY, found in Corynebacterium efficiens (strain DSM 44549 / YS-314 / AJ 12310 / JCM 11189 / NBRC 100395).